Here is a 382-residue protein sequence, read N- to C-terminus: Gap junction alpha-1 protein (382 aa).

Residues 2–23 (GDWSALGKLLDKVQAYSTAGGK) lie on the Cytoplasmic side of the membrane. Serine 5 bears the Phosphoserine mark. Residues 24–44 (VWLSVLFIFRILLLGTAVESA) form a helical membrane-spanning segment. The Extracellular segment spans residues 45–76 (WGDEQSAFRCNTQQPGCENVCYDKSFPISHVR). Disulfide bonds link cysteine 54–cysteine 192 and cysteine 187–cysteine 198. A helical membrane pass occupies residues 77–97 (FWVLQIIFVSVPTLLYLAHVF). Topologically, residues 98-155 (YVMRKEEKLNKKEEELKVAQTDGVNVEMHLKQIEIKKFKYGIEEHGKVKMRGGLLRTY) are cytoplasmic. A Glycyl lysine isopeptide (Lys-Gly) (interchain with G-Cter in SUMO) cross-link involves residue lysine 144. Residues 156–176 (IISILFKSIFEVAFLLIQWYI) form a helical membrane-spanning segment. At 177-207 (YGFSLSAVYTCKRDPCPHQVDCFLSRPTEKT) the chain is on the extracellular side. Residues 208-228 (IFIIFMLVVSLVSLALNIIEL) form a helical membrane-spanning segment. Residues 229 to 382 (FYVFFKGVKD…SRPRPDDLEI (154 aa)) lie on the Cytoplasmic side of the membrane. Residue lysine 237 forms a Glycyl lysine isopeptide (Lys-Gly) (interchain with G-Cter in SUMO) linkage. The interval 244–382 (SDPYHTTSGA…SRPRPDDLEI (139 aa)) is interaction with NOV. Tyrosine 247 carries the post-translational modification Phosphotyrosine. Residues serine 255 and serine 262 each carry the phosphoserine modification. The interval 264–382 (KYAYFNGCSS…SRPRPDDLEI (119 aa)) is interaction with UBQLN4. The residue at position 271 (cysteine 271) is an S-nitrosocysteine. The residue at position 275 (threonine 275) is a Phosphothreonine. A phosphoserine mark is found at serine 306 and serine 314. The segment covering 317–332 (QNRMGQAGSTISNSHA) has biased composition (polar residues). The interval 317 to 382 (QNRMGQAGST…SRPRPDDLEI (66 aa)) is disordered. At serine 325 the chain carries Phosphoserine; by CK1. Phosphothreonine is present on threonine 326. A phosphoserine; by CK1 mark is found at serine 328 and serine 330. Residues serine 344 and serine 365 each carry the phosphoserine modification. The segment covering 362–374 (RPSSRASSRASSR) has biased composition (low complexity). Serine 368 carries the phosphoserine; by PKC/PRKCG and PKC/PRKCD modification. A phosphoserine mark is found at serine 369 and serine 373.

The protein belongs to the connexin family. Alpha-type (group II) subfamily. In terms of assembly, a connexon is composed of a hexamer of connexins. Interacts with SGSM3. Interacts with RIC1/CIP150. Interacts with CNST and CSNK1D. Interacts (via C-terminus) with TJP1. Interacts (via C-terminus) with SRC (via SH3 domain). Interacts (not ubiquitinated) with UBQLN4 (via UBA domain). Interacts with NOV. Interacts with TMEM65. Interacts with ANK3/ANKG and PKP2. Phosphorylation at Ser-325, Ser-328 and Ser-330 by CK1 modulates gap junction assembly. Phosphorylated at Ser-368 by PRKCG; phosphorylation induces disassembly of gap junction plaques and inhibition of gap junction activity. Phosphorylation at Ser-368 by PRKCD triggers its internalization into small vesicles leading to proteasome-mediated degradation. In terms of processing, sumoylated with SUMO1, SUMO2 and SUMO3, which may regulate the level of functional Cx43 gap junctions at the plasma membrane. May be desumoylated by SENP1 or SENP2. Post-translationally, S-nitrosylation at Cys-271 is enriched at the muscle endothelial gap junction in arteries, it augments channel permeability and may regulate of smooth muscle cell to endothelial cell communication. Acetylated in the developing cortex; leading to delocalization from the cell membrane.

Its subcellular location is the cell membrane. It is found in the cell junction. The protein resides in the gap junction. It localises to the endoplasmic reticulum. In terms of biological role, gap junction protein that acts as a regulator of bladder capacity. A gap junction consists of a cluster of closely packed pairs of transmembrane channels, the connexons, through which materials of low MW diffuse from one cell to a neighboring cell. May play a critical role in the physiology of hearing by participating in the recycling of potassium to the cochlear endolymph. Negative regulator of bladder functional capacity: acts by enhancing intercellular electrical and chemical transmission, thus sensitizing bladder muscles to cholinergic neural stimuli and causing them to contract. May play a role in cell growth inhibition through the regulation of NOV expression and localization. Plays an essential role in gap junction communication in the ventricles. The chain is Gap junction alpha-1 protein (GJA1) from Chlorocebus aethiops (Green monkey).